Reading from the N-terminus, the 199-residue chain is Protein extra-macrochaetae (199 aa).

The bHLH domain occupies 23-75 (RIQRHPTHRGDGENAEMKMYLSKLKDLVPFMPKNRKLTKLEIIQHVIDYICDL). Phosphoserine is present on Ser106. Residues 127 to 199 (RLNAEQPAKV…QNAEKDSRQS (73 aa)) form a disordered region. Low complexity predominate over residues 161-182 (QQHQQQQQLQLQQQQLQSQQQL).

Heterodimer with other HLH proteins.

The protein localises to the nucleus. Functionally, participates in sensory organ patterning by antagonizing the neurogenic activity of the Achaete-scute complex (AS-C). It lacks a basic DNA-binding domain but is able to form heterodimers with other HLH proteins, thereby inhibiting DNA binding. May sequester proneural proteins in complexes inefficient for DNA interaction. EMC also affects vein differentiation. Inhibits the activity of AS-C proteins by forming an non-DNA binding heterodimer. The sequence is that of Protein extra-macrochaetae (emc) from Drosophila melanogaster (Fruit fly).